Here is a 132-residue protein sequence, read N- to C-terminus: Small ribosomal subunit protein uS8c (132 aa).

Belongs to the universal ribosomal protein uS8 family. In terms of assembly, part of the 30S ribosomal subunit.

The protein localises to the plastid. Its subcellular location is the chloroplast. In terms of biological role, one of the primary rRNA binding proteins, it binds directly to 16S rRNA central domain where it helps coordinate assembly of the platform of the 30S subunit. The polypeptide is Small ribosomal subunit protein uS8c (rps8) (Acorus calamus (Sweet flag)).